Reading from the N-terminus, the 712-residue chain is Polyribonucleotide nucleotidyltransferase (712 aa).

Mg(2+) contacts are provided by aspartate 488 and aspartate 494. In terms of domain architecture, KH spans 555–614; sequence PKIETINIPTDKIREVIGSGGKVIREIVATTGAKVDINDDGVVKVSASDGAKIKAAIDWI. Residues 624–692 enclose the S1 motif domain; sequence GKIYDGKVVK…DRGKTKLSMK (69 aa).

It belongs to the polyribonucleotide nucleotidyltransferase family. The cofactor is Mg(2+).

It localises to the cytoplasm. The catalysed reaction is RNA(n+1) + phosphate = RNA(n) + a ribonucleoside 5'-diphosphate. Functionally, involved in mRNA degradation. Catalyzes the phosphorolysis of single-stranded polyribonucleotides processively in the 3'- to 5'-direction. The polypeptide is Polyribonucleotide nucleotidyltransferase (Caulobacter vibrioides (strain NA1000 / CB15N) (Caulobacter crescentus)).